The chain runs to 217 residues: U exon protein (217 aa).

Disordered stretches follow at residues I79 to V113 and K171 to R217. Basic residues predominate over residues R188–C197. Polar residues predominate over residues G202–R217.

The protein belongs to the adenoviridae U exon protein family.

The protein localises to the host nucleus. It localises to the host nucleoplasm. Its subcellular location is the host nucleolus. Functionally, might play a role in viral replication since it is associated with viral replication centers. Seems to have an effect on DBP localization. This chain is U exon protein, found in Human adenovirus C serotype 5 (HAdV-5).